Consider the following 265-residue polypeptide: Glutamate racemase (265 aa).

Substrate is bound by residues 10-11 (DS) and 42-43 (YG). Cys73 acts as the Proton donor/acceptor in catalysis. Position 74–75 (74–75 (NT)) interacts with substrate. Residue Cys183 is the Proton donor/acceptor of the active site. Residue 184–185 (TH) coordinates substrate.

The protein belongs to the aspartate/glutamate racemases family.

The enzyme catalyses L-glutamate = D-glutamate. Its pathway is cell wall biogenesis; peptidoglycan biosynthesis. Its function is as follows. Provides the (R)-glutamate required for cell wall biosynthesis. In Corynebacterium diphtheriae (strain ATCC 700971 / NCTC 13129 / Biotype gravis), this protein is Glutamate racemase.